Consider the following 1071-residue polypeptide: Fused isobutyryl-CoA mutase (1071 aa).

Residues 12-149 form the B12-binding domain; sequence PVRFVTSAAL…QTCDVDLTGE (138 aa). Residue His25 participates in adenosylcob(III)alamin binding. The GTPase chaperone MeaI stretch occupies residues 153–400; sequence VEAVLAGERT…YQHLLELLGA (248 aa). GTP is bound at residue 203–208; sequence GSGKSS. Positions 207, 232, 233, and 246 each coordinate Mg(2+). Arg249 lines the GTP pocket. Positions 293 and 294 each coordinate Mg(2+). Position 340–343 (340–343) interacts with GTP; sequence NKFE. Residues 401-558 are linker; the sequence is RGLPVDEGVL…RSENLPGHFP (158 aa). Substrate is bound by residues Phe566, Arg601, Arg707, Tyr751, Ser800, Arg835, and Lys840. The GTP site is built by Glu952 and Asn1070.

The protein belongs to the IcmF family. Homodimer. Adenosylcob(III)alamin serves as cofactor. Mg(2+) is required as a cofactor.

It carries out the reaction 2-methylpropanoyl-CoA = butanoyl-CoA. The enzyme catalyses GTP + H2O = GDP + phosphate + H(+). Catalyzes the reversible interconversion of isobutyryl-CoA and n-butyryl-CoA, using radical chemistry. Also exhibits GTPase activity, associated with its G-protein domain (MeaI) that functions as a chaperone that assists cofactor delivery and proper holo-enzyme assembly. Does not exhibit methylmalonyl-CoA mutase (MCM) activity. This Nocardia farcinica (strain IFM 10152) protein is Fused isobutyryl-CoA mutase.